Here is a 510-residue protein sequence, read N- to C-terminus: 2,3-bisphosphoglycerate-independent phosphoglycerate mutase (510 aa).

Residues Asp-12 and Ser-62 each contribute to the Mn(2+) site. The active-site Phosphoserine intermediate is Ser-62. Residues His-123, 153 to 154 (RD), Arg-185, Arg-191, 260 to 263 (RPDR), and Lys-335 contribute to the substrate site. Residues Asp-402, His-406, Asp-443, His-444, and His-461 each coordinate Mn(2+).

This sequence belongs to the BPG-independent phosphoglycerate mutase family. In terms of assembly, monomer. Requires Mn(2+) as cofactor.

It catalyses the reaction (2R)-2-phosphoglycerate = (2R)-3-phosphoglycerate. It participates in carbohydrate degradation; glycolysis; pyruvate from D-glyceraldehyde 3-phosphate: step 3/5. Functionally, catalyzes the interconversion of 2-phosphoglycerate and 3-phosphoglycerate. This Listeria innocua serovar 6a (strain ATCC BAA-680 / CLIP 11262) protein is 2,3-bisphosphoglycerate-independent phosphoglycerate mutase.